We begin with the raw amino-acid sequence, 378 residues long: Protein FAM170B (378 aa).

3 disordered regions span residues 1 to 56, 244 to 265, and 277 to 378; these read MKHH…LPDD, TRDQ…DSSE, and QQQP…QQGK. 2 stretches are compositionally biased toward low complexity: residues 277–339 and 349–378; these read QQQP…QPLQ and PQKQ…QQGK.

The protein belongs to the FAM170 family. As to quaternary structure, interacts with GOPC. Exclusively expressed in adult testis (at protein level). Expression first started at postnatal week 3 in round spermatids, elongated spermatids and mature sperm.

It is found in the cytoplasmic vesicle. The protein localises to the secretory vesicle. The protein resides in the acrosome. Its subcellular location is the acrosome outer membrane. Functionally, plays a role in fertilization through the acrosome reaction. This Mus musculus (Mouse) protein is Protein FAM170B.